The primary structure comprises 906 residues: MLGKLLTKVFGSRNDRTLKNLGKIVIQINALEADYEKLSDEELKAKTTEFRTRLENGETLDNIMAEAFAVVREASKRVFDMRPFDVQLLGGMVLDSNRIAEMRTGEGKTLTATLPAYLNGITGKGVHVITVNDYLATRDAENNRPLFEFLGLSVGINVAGLGQFEKKQAYDADITYGTNNEFGFDYLRDNMAFSPQERVQRPLHYALIDEVDSILIDEARTPLIISGAAEDSSELYAKINLLIPSLIPQDKEDTEDYVGEGDYSIDEKGKQVHLTERGQEKVELLLIEKGMLAEGDSLYSATNISLLHHVNAALRAHTLFEKDIDYIVQDDEVIIVDEHTGRTMPGRRWSEGLHQAVEAKEGAKIQNENQTLASITFQNYFRQYEKLAGMTGTADTEAFEFQHIYGLDTVVVPTNRPMVRKDMADLVYLTAPEKYAAIIKDIEGCRERGQPVLVGTVSIEQSELLNSLLKKANIPHSVLNAKFHEKEAEIVAQAGSLGAVTIATNMAGRGTDIVLGGNWNMEIEALENPTAEQKAKIKADWKIRHDEVLAAGGLHILGTERHESRRIDNQLRGRAGRQGDAGSSRFYLSMEDSLMRIFASDRVSGMMKKLGMEEGEAIEHPWVSRAIENAQRKVEARNFDIRKQLLEYDDVANDQRQVVYAQRNELMDAESIQDTIQNIEQDVISGIVDQYIPPQSLEELWDVPGLEQRLGNEFGLKLTIQEWLDQDDNLHEETLRERILTSWSELYKAKEEMVGAQVLRQFEKAVMLQTLDGLWKEHLAAMDHLRQGIHLRGYAQKNPKQEYKRESFELFQQLLETLKNDVISVLSKVQVQAQSDVDEMEQRRRDEEAKIKLAYQHASVEALSDAGEQQIEAPKTVIREGEKIGRNDPCPCGSGQKYKQCHGKLS.

Residues glutamine 87, 105–109, and aspartate 512 each bind ATP; that span reads GEGKT. The segment at 879–906 is disordered; it reads REGEKIGRNDPCPCGSGQKYKQCHGKLS. Positions 890, 892, 901, and 902 each coordinate Zn(2+).

It belongs to the SecA family. As to quaternary structure, monomer and homodimer. Part of the essential Sec protein translocation apparatus which comprises SecA, SecYEG and auxiliary proteins SecDF-YajC and YidC. Zn(2+) serves as cofactor.

Its subcellular location is the cell inner membrane. The protein resides in the cytoplasm. The catalysed reaction is ATP + H2O + cellular proteinSide 1 = ADP + phosphate + cellular proteinSide 2.. Part of the Sec protein translocase complex. Interacts with the SecYEG preprotein conducting channel. Has a central role in coupling the hydrolysis of ATP to the transfer of proteins into and across the cell membrane, serving both as a receptor for the preprotein-SecB complex and as an ATP-driven molecular motor driving the stepwise translocation of polypeptide chains across the membrane. The protein is Protein translocase subunit SecA of Shewanella frigidimarina (strain NCIMB 400).